The sequence spans 343 residues: MKIKALSKLKPEEGIWMNEVDKPEMGHNDLLIRIKKTAICGTDVHIYNWDEWSQKTIPVPMVVGHEYVGEVVGIGQEVRGFTIGDRVSGEGHITCGHCRNCRGGRTHLCRNTTGVGVNRDGAFAEFLVIPAFNAFKIPAGISDDLASIFDPFGNAVHTALSFDLVGEDVLITGAGPIGIMAAAVAKHVGARHVVITDVNEYRLDLARKMGVTRAVNVANEKLEDVMSELGMTEGFDVGLEMSGVPSAFNGMLASMNHGGKVALLGIPPSDMAVDWTQVIFKGLVIKGIYGREMFETWYKMASLIQSGLDLTPIITHHYKIDDFQKGFDMMRSGMSGKVILDWE.

Cys40 is a binding site for Zn(2+). Residues Thr42 and His45 each act as charge relay system in the active site. Positions 65, 66, 95, 98, 101, and 109 each coordinate Zn(2+). Residues Ile177, Asp197, Arg202, 264 to 266 (LGI), and 288 to 289 (IY) contribute to the NAD(+) site.

This sequence belongs to the zinc-containing alcohol dehydrogenase family. Homotetramer. Zn(2+) serves as cofactor.

It is found in the cytoplasm. It catalyses the reaction L-threonine + NAD(+) = (2S)-2-amino-3-oxobutanoate + NADH + H(+). It functions in the pathway amino-acid degradation; L-threonine degradation via oxydo-reductase pathway; glycine from L-threonine: step 1/2. In terms of biological role, catalyzes the NAD(+)-dependent oxidation of L-threonine to 2-amino-3-ketobutyrate. This is L-threonine 3-dehydrogenase from Photobacterium profundum (strain SS9).